The following is a 232-amino-acid chain: 5'-methylthioadenosine/S-adenosylhomocysteine nucleosidase (232 aa).

The active-site Proton acceptor is Glu-14. Substrate contacts are provided by residues Gly-80, Val-154, and 175–176 (ME). The Proton donor role is filled by Asp-199.

The protein belongs to the PNP/UDP phosphorylase family. MtnN subfamily.

The catalysed reaction is S-adenosyl-L-homocysteine + H2O = S-(5-deoxy-D-ribos-5-yl)-L-homocysteine + adenine. It catalyses the reaction S-methyl-5'-thioadenosine + H2O = 5-(methylsulfanyl)-D-ribose + adenine. The enzyme catalyses 5'-deoxyadenosine + H2O = 5-deoxy-D-ribose + adenine. It functions in the pathway amino-acid biosynthesis; L-methionine biosynthesis via salvage pathway; S-methyl-5-thio-alpha-D-ribose 1-phosphate from S-methyl-5'-thioadenosine (hydrolase route): step 1/2. Its function is as follows. Catalyzes the irreversible cleavage of the glycosidic bond in both 5'-methylthioadenosine (MTA) and S-adenosylhomocysteine (SAH/AdoHcy) to adenine and the corresponding thioribose, 5'-methylthioribose and S-ribosylhomocysteine, respectively. Also cleaves 5'-deoxyadenosine, a toxic by-product of radical S-adenosylmethionine (SAM) enzymes, into 5-deoxyribose and adenine. The protein is 5'-methylthioadenosine/S-adenosylhomocysteine nucleosidase of Actinobacillus pleuropneumoniae serotype 5b (strain L20).